Here is a 242-residue protein sequence, read N- to C-terminus: Flavin prenyltransferase PAD1, mitochondrial (242 aa).

The N-terminal 58 residues, 1-58 (MLLFPRRTNIAFFKTTGIFANFPLLGRTITTSPSFLTHKLSKEVTRASTSPPRPKRIV), are a transit peptide targeting the mitochondrion. FMN is bound by residues 63 to 65 (GAT), Ser89, 140 to 143 (SMKS), and Arg175. Positions 205 and 221 each coordinate dimethylallyl phosphate.

This sequence belongs to the UbiX/PAD1 family. Oligomer.

Its subcellular location is the mitochondrion. It catalyses the reaction dimethylallyl phosphate + FMNH2 = prenylated FMNH2 + phosphate. Functionally, flavin prenyltransferase that catalyzes the synthesis of the prenylated FMN cofactor (prenyl-FMN) for the ferulic acid decarboxylase FDC1/ubiD. The prenyltransferase is metal-independent and links a dimethylallyl moiety from dimethylallyl monophosphate (DMAP) to the flavin N5 and C6 atoms of FMN. Involved in the decarboxylation of phenylacrylic acids like ferulic acid, p-coumaric acid or cinnamic acid, producing the corresponding vinyl derivatives which play the role of aroma metabolites. Also involved in the degradation of the food preservative sorbic acid (2,4-hexadienoic acid) to a volatile hydrocarbon, 1,3-pentadiene. Not essential for ubiquinone synthesis. Can rescue Q biosynthesis in E.coli strains lacking UbiX. Has mRNA binding activity. This is Flavin prenyltransferase PAD1, mitochondrial from Saccharomyces cerevisiae (strain ATCC 204508 / S288c) (Baker's yeast).